Consider the following 170-residue polypeptide: Mediator of RNA polymerase II transcription subunit 10 (170 aa).

Belongs to the Mediator complex subunit 10 family. As to quaternary structure, component of the Mediator complex.

It is found in the nucleus. In terms of biological role, component of the Mediator complex, a coactivator involved in the regulated transcription of nearly all RNA polymerase II-dependent genes. Mediator functions as a bridge to convey information from gene-specific regulatory proteins to the basal RNA polymerase II transcription machinery. Mediator is recruited to promoters by direct interactions with regulatory proteins and serves as a scaffold for the assembly of a functional preinitiation complex with RNA polymerase II and the general transcription factors. In Candida albicans (strain SC5314 / ATCC MYA-2876) (Yeast), this protein is Mediator of RNA polymerase II transcription subunit 10 (NUT2).